Consider the following 428-residue polypeptide: UPF0597 protein BF3560 (428 aa).

It belongs to the UPF0597 family.

The polypeptide is UPF0597 protein BF3560 (Bacteroides fragilis (strain ATCC 25285 / DSM 2151 / CCUG 4856 / JCM 11019 / LMG 10263 / NCTC 9343 / Onslow / VPI 2553 / EN-2)).